Consider the following 620-residue polypeptide: Guanylate-binding protein 3 (620 aa).

Residues 1 to 304 are GTPase domain (Globular); it reads MEAPICLVEN…NAINSGTVPC (304 aa). Positions 29–271 constitute a GB1/RHD3-type G domain; the sequence is AQPLVVVAIV…FCSYIFTNGK (243 aa). Residues 39–46, 61–63, and 91–95 each bind GTP; these read GLYRTGKS, LGS, and DTEGL. 2 coiled-coil regions span residues 375–411 and 477–582; these read KKLV…SESL and DGER…TRRK.

The protein belongs to the TRAFAC class dynamin-like GTPase superfamily. GB1/RHD3 GTPase family. GB1 subfamily. Heterodimer with other family members, including GBP1, GBP2 and GBP5. Dimerization regulates subcellular location. As to expression, brain, lung, heart, spleen, kidney, liver and intestine.

The protein localises to the cytoplasm. Its subcellular location is the perinuclear region. It is found in the golgi apparatus membrane. It carries out the reaction GTP + H2O = GDP + phosphate + H(+). Functionally, interferon (IFN)-inducible GTPase that plays important roles in innate immunity against a diverse range of bacterial, viral and protozoan pathogens. Hydrolyzes GTP very efficiently; GDP rather than GMP is the major reaction product. Following infection, recruited to the pathogen-containing vacuoles or vacuole-escaped bacteria and acts as a positive regulator of inflammasome assembly by promoting the release of inflammasome ligands from bacteria. Acts by promoting lysis of pathogen-containing vacuoles, releasing pathogens into the cytosol. Following pathogen release in the cytosol, promotes recruitment of proteins that mediate bacterial cytolysis, such as Gm12250/Irgb10: this liberates ligands that are detected by inflammasomes, such as lipopolysaccharide (LPS) that activates the non-canonical CASP4/CASP11 inflammasome or double-stranded DNA (dsDNA) that activates the AIM2 inflammasome. May play a role in erythroid differentiation. This is Guanylate-binding protein 3 from Mus musculus (Mouse).